Here is a 284-residue protein sequence, read N- to C-terminus: 4-hydroxybenzoate octaprenyltransferase (284 aa).

A run of 8 helical transmembrane segments spans residues 16-36 (PIGILLLLWPTLWALWLASDG), 40-60 (WTLLAIFTLGTILMRSAGCAI), 91-111 (LLVALALALLSFALIWPLNTL), 132-152 (FFAIPQAYLGIAFGFGIPMGF), 157-177 (NTVPAAAWWLLVANVFWAVAY), 206-226 (VAAVMFCYAVTLGLIFIVGWQ), 231-251 (TWFAAGMLIATGCAIYHYTLI), and 259-279 (CFAAFRHNNWLGAAIFGGVVL).

The protein belongs to the UbiA prenyltransferase family. Mg(2+) is required as a cofactor.

The protein localises to the cell inner membrane. It catalyses the reaction all-trans-octaprenyl diphosphate + 4-hydroxybenzoate = 4-hydroxy-3-(all-trans-octaprenyl)benzoate + diphosphate. Its pathway is cofactor biosynthesis; ubiquinone biosynthesis. Its function is as follows. Catalyzes the prenylation of para-hydroxybenzoate (PHB) with an all-trans polyprenyl group. Mediates the second step in the final reaction sequence of ubiquinone-8 (UQ-8) biosynthesis, which is the condensation of the polyisoprenoid side chain with PHB, generating the first membrane-bound Q intermediate 3-octaprenyl-4-hydroxybenzoate. In Herminiimonas arsenicoxydans, this protein is 4-hydroxybenzoate octaprenyltransferase.